A 289-amino-acid chain; its full sequence is WUSCHEL-related homeobox 1 (289 aa).

Over residues 1–11 the composition is skewed to low complexity; that stretch reads MDHMQQQQRQQ. Residues 1 to 34 are disordered; the sequence is MDHMQQQQRQQVGGGGGEEVAGRGGVPVCRPSGT. Positions 12–25 are enriched in gly residues; it reads VGGGGGEEVAGRGG. Positions 31–96 form a DNA-binding region, homeobox; WUS-type; it reads PSGTRWTPTT…NHKARERQKK (66 aa).

Belongs to the WUS homeobox family. In terms of assembly, interacts with TPR1, TPR2 and TPR3. In terms of tissue distribution, expressed in young leaf primordia. Expressed in branch an floral meristems. Transiently expressed in the shoot apex.

The protein localises to the nucleus. Its function is as follows. Transcription repressor required for the formation and development of tiller buds and panicles. Required for tiller formation and female sterility. Required for the early developmental stages of axillary meristem formation. Plays a role in maintaining the axillary premeristem zone and in promoting the formation of the axillary meristem by promoting OSH1 expression. Does not seem to be involved in maintenance of the shoot apical meristem (SAM). The polypeptide is WUSCHEL-related homeobox 1 (Oryza sativa subsp. japonica (Rice)).